We begin with the raw amino-acid sequence, 265 residues long: 4-hydroxy-tetrahydrodipicolinate reductase (265 aa).

NAD(+) is bound by residues 7-12 (GASGRM) and D33. R34 contacts NADP(+). NAD(+)-binding positions include 96–98 (GTT) and 120–123 (SANM). The active-site Proton donor/acceptor is H153. H154 contributes to the (S)-2,3,4,5-tetrahydrodipicolinate binding site. Catalysis depends on K157, which acts as the Proton donor. 163–164 (GT) is a binding site for (S)-2,3,4,5-tetrahydrodipicolinate.

It belongs to the DapB family.

Its subcellular location is the cytoplasm. The enzyme catalyses (S)-2,3,4,5-tetrahydrodipicolinate + NAD(+) + H2O = (2S,4S)-4-hydroxy-2,3,4,5-tetrahydrodipicolinate + NADH + H(+). The catalysed reaction is (S)-2,3,4,5-tetrahydrodipicolinate + NADP(+) + H2O = (2S,4S)-4-hydroxy-2,3,4,5-tetrahydrodipicolinate + NADPH + H(+). It functions in the pathway amino-acid biosynthesis; L-lysine biosynthesis via DAP pathway; (S)-tetrahydrodipicolinate from L-aspartate: step 4/4. Catalyzes the conversion of 4-hydroxy-tetrahydrodipicolinate (HTPA) to tetrahydrodipicolinate. The polypeptide is 4-hydroxy-tetrahydrodipicolinate reductase (Burkholderia pseudomallei (strain 1106a)).